Consider the following 414-residue polypeptide: Methylthioribose-1-phosphate isomerase (414 aa).

The segment covering 205–215 has biased composition (polar residues); sequence SQSQGSENPPS. Positions 205–224 are disordered; the sequence is SQSQGSENPPSKKQKKDAAP. Residue Asp-283 is the Proton donor of the active site.

The protein belongs to the eIF-2B alpha/beta/delta subunits family. MtnA subfamily.

The protein resides in the cytoplasm. The protein localises to the nucleus. It carries out the reaction 5-(methylsulfanyl)-alpha-D-ribose 1-phosphate = 5-(methylsulfanyl)-D-ribulose 1-phosphate. It participates in amino-acid biosynthesis; L-methionine biosynthesis via salvage pathway; L-methionine from S-methyl-5-thio-alpha-D-ribose 1-phosphate: step 1/6. Functionally, catalyzes the interconversion of methylthioribose-1-phosphate (MTR-1-P) into methylthioribulose-1-phosphate (MTRu-1-P). The polypeptide is Methylthioribose-1-phosphate isomerase (Zygosaccharomyces rouxii (strain ATCC 2623 / CBS 732 / NBRC 1130 / NCYC 568 / NRRL Y-229)).